A 42-amino-acid chain; its full sequence is Cytochrome b559 subunit beta (42 aa).

A helical membrane pass occupies residues Trp-17–Ala-33. A heme-binding site is contributed by His-21.

This sequence belongs to the PsbE/PsbF family. Heterodimer of an alpha subunit and a beta subunit. PSII is composed of 1 copy each of membrane proteins PsbA, PsbB, PsbC, PsbD, PsbE, PsbF, PsbH, PsbI, PsbJ, PsbK, PsbL, PsbM, PsbT, PsbX, PsbY, PsbZ, Psb30/Ycf12, at least 3 peripheral proteins of the oxygen-evolving complex and a large number of cofactors. It forms dimeric complexes. Heme b is required as a cofactor.

It localises to the plastid. The protein localises to the chloroplast thylakoid membrane. In terms of biological role, this b-type cytochrome is tightly associated with the reaction center of photosystem II (PSII). PSII is a light-driven water:plastoquinone oxidoreductase that uses light energy to abstract electrons from H(2)O, generating O(2) and a proton gradient subsequently used for ATP formation. It consists of a core antenna complex that captures photons, and an electron transfer chain that converts photonic excitation into a charge separation. This is Cytochrome b559 subunit beta from Emiliania huxleyi (Coccolithophore).